The primary structure comprises 333 residues: L-lactate dehydrogenase B chain (333 aa).

Residues 29–57 (GQVGMACAISILGKGLCDELALVDVLEDK) and Arg99 contribute to the NAD(+) site. Residues Arg106, Asn138, and Arg169 each contribute to the substrate site. An NAD(+)-binding site is contributed by Asn138. His193 serves as the catalytic Proton acceptor. Residue Thr248 coordinates substrate.

It belongs to the LDH/MDH superfamily. LDH family. Homotetramer.

Its subcellular location is the cytoplasm. The catalysed reaction is (S)-lactate + NAD(+) = pyruvate + NADH + H(+). It participates in fermentation; pyruvate fermentation to lactate; (S)-lactate from pyruvate: step 1/1. In terms of biological role, interconverts simultaneously and stereospecifically pyruvate and lactate with concomitant interconversion of NADH and NAD(+). The chain is L-lactate dehydrogenase B chain (LDHB) from Gallus gallus (Chicken).